We begin with the raw amino-acid sequence, 215 residues long: Protein GET1 (215 aa).

At 1 to 4 the chain is on the lumenal side; it reads MINL. The chain crosses the membrane as a helical span at residues 5-24; sequence ALVIFLCTLLNQIVSWVGKS. At 25–108 the chain is on the cytoplasmic side; the sequence is VLQEIAFTAY…SFSKKFSTLL (84 aa). A coiled-coil region spans residues 73-94; it reads AKLRRKLDKGLADLEKTNNTLS. Residues 109 to 129 traverse the membrane as a helical segment; the sequence is WLMTTGAQFLLSWWFRKQPIF. Residues 130–153 are Lumenal-facing; the sequence is WLPEGWVPYPVAWLLSFPSAPIGS. Residues 154–170 traverse the membrane as a helical segment; the sequence is VSSGAWGAICRRVLSTL. At 171–215 the chain is on the cytoplasmic side; the sequence is QEIIQSVLAPSPAATGPVPTGPSSAKNDQPEAKIEALALEHEKLD. The segment at 181 to 202 is disordered; that stretch reads SPAATGPVPTGPSSAKNDQPEA.

It belongs to the WRB/GET1 family. Interacts with GET3.

The protein resides in the endoplasmic reticulum membrane. In terms of biological role, required for the post-translational delivery of tail-anchored (TA) proteins to the endoplasmic reticulum. Acts as a membrane receptor for soluble GET3, which recognizes and selectively binds the transmembrane domain of TA proteins in the cytosol. The chain is Protein GET1 from Cryptococcus neoformans var. neoformans serotype D (strain B-3501A) (Filobasidiella neoformans).